Here is a 131-residue protein sequence, read N- to C-terminus: Large ribosomal subunit protein bL19 (131 aa).

The protein belongs to the bacterial ribosomal protein bL19 family.

Its function is as follows. This protein is located at the 30S-50S ribosomal subunit interface and may play a role in the structure and function of the aminoacyl-tRNA binding site. The sequence is that of Large ribosomal subunit protein bL19 from Anaeromyxobacter sp. (strain K).